We begin with the raw amino-acid sequence, 560 residues long: Glutamate--tRNA ligase (560 aa).

Residues proline 108–histidine 118 carry the 'HIGH' region motif.

The protein belongs to the class-I aminoacyl-tRNA synthetase family. Glutamate--tRNA ligase type 2 subfamily.

The protein localises to the cytoplasm. It catalyses the reaction tRNA(Glu) + L-glutamate + ATP = L-glutamyl-tRNA(Glu) + AMP + diphosphate. In terms of biological role, catalyzes the attachment of glutamate to tRNA(Glu) in a two-step reaction: glutamate is first activated by ATP to form Glu-AMP and then transferred to the acceptor end of tRNA(Glu). The polypeptide is Glutamate--tRNA ligase (Methanocorpusculum labreanum (strain ATCC 43576 / DSM 4855 / Z)).